A 172-amino-acid polypeptide reads, in one-letter code: ATP synthase subunit b (172 aa).

A helical membrane pass occupies residues 5 to 24 (LLMLLLLGSVSLFANEAAAS).

This sequence belongs to the ATPase B chain family. In terms of assembly, F-type ATPases have 2 components, F(1) - the catalytic core - and F(0) - the membrane proton channel. F(1) has five subunits: alpha(3), beta(3), gamma(1), delta(1), epsilon(1). F(0) has three main subunits: a(1), b(2) and c(10-14). The alpha and beta chains form an alternating ring which encloses part of the gamma chain. F(1) is attached to F(0) by a central stalk formed by the gamma and epsilon chains, while a peripheral stalk is formed by the delta and b chains.

It is found in the cell inner membrane. Its function is as follows. F(1)F(0) ATP synthase produces ATP from ADP in the presence of a proton or sodium gradient. F-type ATPases consist of two structural domains, F(1) containing the extramembraneous catalytic core and F(0) containing the membrane proton channel, linked together by a central stalk and a peripheral stalk. During catalysis, ATP synthesis in the catalytic domain of F(1) is coupled via a rotary mechanism of the central stalk subunits to proton translocation. Component of the F(0) channel, it forms part of the peripheral stalk, linking F(1) to F(0). This chain is ATP synthase subunit b, found in Nitratiruptor sp. (strain SB155-2).